Reading from the N-terminus, the 446-residue chain is Inhibitor of Apoptosis OPG037 (446 aa).

6 ANK repeats span residues 71 to 100 (DGNYPLHIASKINNNRIVAMLLTHGADPNA), 104 to 135 (QHKTPLYYLSGTDDEVIERINLLVQYGAKINN), 207 to 237 (DGNTPLHIVCSKTVKNVDIINLLLPSTDVNK), 241 to 271 (FGDSPLTLLIKTLSPAHLINKLLSTSNVITD), 296 to 325 (YDSTDFKMAVEVGSIRCIKYLLDNDIICED), and 327 to 351 (MYYAVLSEYETMVDYLLFNHFSVDS).

This sequence belongs to the orthopoxvirus OPG037 protein family. May interact with host caspase-9-Apaf-1 complex.

Its subcellular location is the host cytoplasm. Its function is as follows. Inhibits host apoptosis. Acts by associating with host apoptosome. The polypeptide is Inhibitor of Apoptosis OPG037 (OPG037) (Variola virus (isolate Human/India/Ind3/1967) (VARV)).